Reading from the N-terminus, the 99-residue chain is Small ribosomal subunit protein bS20 (99 aa).

The protein belongs to the bacterial ribosomal protein bS20 family.

Functionally, binds directly to 16S ribosomal RNA. In Thermotoga neapolitana (strain ATCC 49049 / DSM 4359 / NBRC 107923 / NS-E), this protein is Small ribosomal subunit protein bS20.